We begin with the raw amino-acid sequence, 214 residues long: Probable nicotinate-nucleotide adenylyltransferase (214 aa).

This sequence belongs to the NadD family.

The enzyme catalyses nicotinate beta-D-ribonucleotide + ATP + H(+) = deamido-NAD(+) + diphosphate. Its pathway is cofactor biosynthesis; NAD(+) biosynthesis; deamido-NAD(+) from nicotinate D-ribonucleotide: step 1/1. Its function is as follows. Catalyzes the reversible adenylation of nicotinate mononucleotide (NaMN) to nicotinic acid adenine dinucleotide (NaAD). In Mycolicibacterium vanbaalenii (strain DSM 7251 / JCM 13017 / BCRC 16820 / KCTC 9966 / NRRL B-24157 / PYR-1) (Mycobacterium vanbaalenii), this protein is Probable nicotinate-nucleotide adenylyltransferase.